Here is a 184-residue protein sequence, read N- to C-terminus: Protein GrpE (184 aa).

The disordered stretch occupies residues 1–26; it reads MTAPQEPVDSTPESGENAATPGLEDD.

Belongs to the GrpE family. Homodimer.

The protein localises to the cytoplasm. Its function is as follows. Participates actively in the response to hyperosmotic and heat shock by preventing the aggregation of stress-denatured proteins, in association with DnaK and GrpE. It is the nucleotide exchange factor for DnaK and may function as a thermosensor. Unfolded proteins bind initially to DnaJ; upon interaction with the DnaJ-bound protein, DnaK hydrolyzes its bound ATP, resulting in the formation of a stable complex. GrpE releases ADP from DnaK; ATP binding to DnaK triggers the release of the substrate protein, thus completing the reaction cycle. Several rounds of ATP-dependent interactions between DnaJ, DnaK and GrpE are required for fully efficient folding. This chain is Protein GrpE, found in Bordetella bronchiseptica (strain ATCC BAA-588 / NCTC 13252 / RB50) (Alcaligenes bronchisepticus).